The primary structure comprises 332 residues: 2,3-diketo-L-gulonate reductase (332 aa).

Residue H44 is the Proton donor of the active site. NAD(+) is bound by residues 168 to 174 (ITMVDMS), 224 to 225 (WK), and 304 to 306 (GHE).

This sequence belongs to the LDH2/MDH2 oxidoreductase family. DlgD subfamily. As to quaternary structure, homodimer.

The protein resides in the cytoplasm. The catalysed reaction is 3-dehydro-L-gulonate + NAD(+) = 2,3-dioxo-L-gulonate + NADH + H(+). It catalyses the reaction 3-dehydro-L-gulonate + NADP(+) = 2,3-dioxo-L-gulonate + NADPH + H(+). Functionally, catalyzes the reduction of 2,3-diketo-L-gulonate in the presence of NADH, to form 3-keto-L-gulonate. This is 2,3-diketo-L-gulonate reductase from Klebsiella oxytoca.